The sequence spans 387 residues: EP300-interacting inhibitor of differentiation 3 (387 aa).

Residues 1–19 (MSEEKCSLTGGEEKGEELA) are compositionally biased toward basic and acidic residues. Residues 1-77 (MSEEKCSLTG…SDDLSPEAPC (77 aa)) are disordered. Residues 32–72 (EEDDDDDEEALKKEEEEEEEEEEEDEEEEEEGPDSSSDDLS) are compositionally biased toward acidic residues.

Belongs to the NSE4 family. As to quaternary structure, component of the SMC5-SMC6 complex which consists at least of SMC5, SMC6, NSMCE2, NSMCE1, NSMCE4A or EID3 and NSMCE3. NSMCE1, NSMCE4A or EID3 and NSMCE3 probably form a subcomplex that bridges the head domains of the SMC5:SMC6 heterodimer. Homodimer, and heterodimer with EID2. Interacts with the C-terminal region of CREBBP.

The protein resides in the nucleus. Its subcellular location is the cytoplasm. It localises to the chromosome. The protein localises to the telomere. Its function is as follows. Tissue-specific component of the SMC5-SMC6 complex, a complex involved in repair of DNA double-strand breaks by homologous recombination. The complex may promote sister chromatid homologous recombination by recruiting the SMC1-SMC3 cohesin complex to double-strand breaks. The complex is required for telomere maintenance via recombination and mediates sumoylation of shelterin complex (telosome) components. In terms of biological role, acts as a repressor of nuclear receptor-dependent transcription possibly by interfering with CREBBP-dependent coactivation. May function as a coinhibitor of other CREBBP/EP300-dependent transcription factors. This chain is EP300-interacting inhibitor of differentiation 3, found in Rattus norvegicus (Rat).